The sequence spans 202 residues: Cytochrome c oxidase assembly protein CtaG (202 aa).

Topologically, residues 1–14 (MTSPANPSEVTRDR) are cytoplasmic. Residues 15 to 37 (RNRGVAFVCAGVFVAMVGMSFAA) traverse the membrane as a helical; Signal-anchor for type II membrane protein segment. The Periplasmic portion of the chain corresponds to 38 to 202 (VPLYRLFCQV…GAAKTQKLGG (165 aa)).

Belongs to the COX11/CtaG family.

It is found in the cell inner membrane. Functionally, exerts its effect at some terminal stage of cytochrome c oxidase synthesis, probably by being involved in the insertion of the copper B into subunit I. This chain is Cytochrome c oxidase assembly protein CtaG, found in Chelativorans sp. (strain BNC1).